The following is a 206-amino-acid chain: U-scoloptoxin(08)-Cw1a (206 aa).

Residues 1-24 (MIFRVNLLFSCFCFVLFVFDFSNA) form the signal peptide. Positions 25–164 (SKYDQGSLNI…DLPELKRRKR (140 aa)) are excised as a propeptide. The RLWRNWE 1; approximate repeat unit spans residues 37 to 43 (RLWRDWE). Residues 71 to 77 (RLWRDWE) form an RLWRNWE 2; approximate repeat. One copy of the RLWRNWE 3; approximate repeat lies at 104–110 (RLWRDWE). The RLWRNWE 4 repeat unit spans residues 137-143 (RLWRNWE). The RLWRNWE 5; approximate repeat unit spans residues 164 to 170 (RLWRNED).

Belongs to the scoloptoxin-08 family. In terms of processing, contains 3 disulfide bonds. Expressed by the venom gland.

The protein localises to the secreted. The protein is U-scoloptoxin(08)-Cw1a of Cormocephalus westwoodi (Westwood's green centipede).